Reading from the N-terminus, the 261-residue chain is Indole-3-glycerol phosphate synthase (261 aa).

The protein belongs to the TrpC family.

The enzyme catalyses 1-(2-carboxyphenylamino)-1-deoxy-D-ribulose 5-phosphate + H(+) = (1S,2R)-1-C-(indol-3-yl)glycerol 3-phosphate + CO2 + H2O. Its pathway is amino-acid biosynthesis; L-tryptophan biosynthesis; L-tryptophan from chorismate: step 4/5. The polypeptide is Indole-3-glycerol phosphate synthase (Burkholderia ambifaria (strain MC40-6)).